A 476-amino-acid chain; its full sequence is Ubiquinone biosynthesis monooxygenase COQ6, mitochondrial (476 aa).

A mitochondrion-targeting transit peptide spans 1–42 (MAARIGPMAGLLCVRWWSTAQLAARGGPLVACRRWTSSSTDS).

Belongs to the UbiH/COQ6 family. In terms of assembly, component of a multi-subunit COQ enzyme complex, composed of at least COQ3, COQ4, COQ5, COQ6, COQ7 and COQ9. Interacts with COQ8B and COQ7. Requires FAD as cofactor. In the kidney, expressed almost exclusively in glomerular podocytes. In the inner ear, expressed in the spiral ganglion, as well as in stria vascularis and spiral ligament cells.

It is found in the mitochondrion inner membrane. The protein localises to the golgi apparatus. It localises to the cell projection. The enzyme catalyses 4-hydroxy-3-(all-trans-decaprenyl)benzoate + 2 reduced [2Fe-2S]-[ferredoxin] + O2 + 2 H(+) = 3,4-dihydroxy-5-(all-trans-decaprenyl)benzoate + 2 oxidized [2Fe-2S]-[ferredoxin] + H2O. It catalyses the reaction 2-methoxy-6-(all-trans-decaprenyl)phenol + 2 reduced [2Fe-2S]-[ferredoxin] + O2 + 2 H(+) = 2-methoxy-6-(all-trans-decaprenyl)benzene-1,4-diol + 2 oxidized [2Fe-2S]-[ferredoxin] + H2O. The protein operates within cofactor biosynthesis; ubiquinone biosynthesis. In terms of biological role, FAD-dependent monooxygenase required for two non-consecutive steps during ubiquinone biosynthesis. Required for the C5-ring hydroxylation during ubiquinone biosynthesis by catalyzing the hydroxylation of 4-hydroxy-3-(all-trans-decaprenyl)benzoic acid to 3,4-dihydroxy-5-(all-trans-decaprenyl)benzoic acid. Also acts downstream of COQ4, for the C1-hydroxylation during ubiquinone biosynthesis by catalyzing the hydroxylation of 2-methoxy-6-(all-trans-decaprenyl)phenol to 2-methoxy-6-(all-trans-decaprenyl)benzene-1,4-diol. The electrons required for the hydroxylation reaction are funneled indirectly to COQ6 from NADPH via a ferredoxin/ferredoxin reductase system composed of FDX2 and FDXR. The chain is Ubiquinone biosynthesis monooxygenase COQ6, mitochondrial from Rattus norvegicus (Rat).